The sequence spans 365 residues: MRQDDAQLRHIFLHDVPLLDVRAPVEFAQGAFPGAVNHPLMDDAERHQVGLCYRQQGQPAAIALGQQLVSGHTRRERIAAWAAFAQAHPDGLLYCLRGGLRSQIALQWLHSEAGIAYPRVPGGYKALRMFLIDTTQAAAQECDFVLLSGLTGTGKTALIAQLAQGLDLEGHANHRGSSFGQRLDGQPSQVDFEHRLAIDILKKQARGHRAFVLEDEGRHVGRCSVPLALRQRLERAPIVCLQDSFGARVERIVGDYVIGQCADFVAAHGPALGFERFSTRLLDSLGKLARRLGGARYQQLHADMQAALARQQASGDIDLHRHWIAALVRDYYDPMYAFQRQSRPGRIVFEGDLPAVLAYLRAGCG.

One can recognise a Rhodanese domain in the interval 12 to 136; it reads FLHDVPLLDV…LRMFLIDTTQ (125 aa). Cys-95 functions as the S-selanylcysteine intermediate in the catalytic mechanism.

The protein belongs to the SelU family. Monomer.

The enzyme catalyses 5-methylaminomethyl-2-thiouridine(34) in tRNA + selenophosphate + (2E)-geranyl diphosphate + H2O + H(+) = 5-methylaminomethyl-2-selenouridine(34) in tRNA + (2E)-thiogeraniol + phosphate + diphosphate. It catalyses the reaction 5-methylaminomethyl-2-thiouridine(34) in tRNA + (2E)-geranyl diphosphate = 5-methylaminomethyl-S-(2E)-geranyl-thiouridine(34) in tRNA + diphosphate. The catalysed reaction is 5-methylaminomethyl-S-(2E)-geranyl-thiouridine(34) in tRNA + selenophosphate + H(+) = 5-methylaminomethyl-2-(Se-phospho)selenouridine(34) in tRNA + (2E)-thiogeraniol. It carries out the reaction 5-methylaminomethyl-2-(Se-phospho)selenouridine(34) in tRNA + H2O = 5-methylaminomethyl-2-selenouridine(34) in tRNA + phosphate. Functionally, involved in the post-transcriptional modification of the uridine at the wobble position (U34) of tRNA(Lys), tRNA(Glu) and tRNA(Gln). Catalyzes the conversion of 2-thiouridine (S2U-RNA) to 2-selenouridine (Se2U-RNA). Acts in a two-step process involving geranylation of 2-thiouridine (S2U) to S-geranyl-2-thiouridine (geS2U) and subsequent selenation of the latter derivative to 2-selenouridine (Se2U) in the tRNA chain. The polypeptide is tRNA 2-selenouridine synthase (Verminephrobacter eiseniae (strain EF01-2)).